Here is a 341-residue protein sequence, read N- to C-terminus: L-amino acid-D/L-Glu epimerase (341 aa).

Substrate-binding positions include Thr132 and Lys157–Lys159. Asp186, Glu212, and Asp237 together coordinate Mg(2+). Substrate-binding positions include Lys261 and Asp315–Asp317.

The protein belongs to the mandelate racemase/muconate lactonizing enzyme family. The cofactor is Mg(2+).

In terms of biological role, catalyzes the epimerization of dipeptides with L-Glu in the second position. Has epimerase activity with L-Gly-L-Glu, L-Ala-L-Glu, L-Ser-L-Glu, L-Pro-L-Glu, L-Val-L-Glu, L-Met-L-Glu, L-Thr-L-Glu and L-Phe-L-Glu (in vitro). This is L-amino acid-D/L-Glu epimerase from Sulfurimonas denitrificans (strain ATCC 33889 / DSM 1251) (Thiomicrospira denitrificans (strain ATCC 33889 / DSM 1251)).